The primary structure comprises 118 residues: Large ribosomal subunit protein bL20 (118 aa).

It belongs to the bacterial ribosomal protein bL20 family.

Functionally, binds directly to 23S ribosomal RNA and is necessary for the in vitro assembly process of the 50S ribosomal subunit. It is not involved in the protein synthesizing functions of that subunit. This Klebsiella pneumoniae (strain 342) protein is Large ribosomal subunit protein bL20.